The sequence spans 361 residues: D-alanine--D-alanine ligase (361 aa).

The region spanning 134 to 344 is the ATP-grasp domain; that stretch reads KLLLKSFNIP…FKDLVDNLIN (211 aa). 167 to 222 contributes to the ATP binding site; it reads REALGYPVIVKPAVLGSSIGINVAYSENQIEFFIEEALKYDLTILIEKFIEAREIE. Asp-297, Glu-311, and Asn-313 together coordinate Mg(2+).

This sequence belongs to the D-alanine--D-alanine ligase family. Requires Mg(2+) as cofactor. Mn(2+) serves as cofactor.

The protein localises to the cytoplasm. The catalysed reaction is 2 D-alanine + ATP = D-alanyl-D-alanine + ADP + phosphate + H(+). It functions in the pathway cell wall biogenesis; peptidoglycan biosynthesis. Cell wall formation. The protein is D-alanine--D-alanine ligase of Borrelia garinii subsp. bavariensis (strain ATCC BAA-2496 / DSM 23469 / PBi) (Borreliella bavariensis).